The primary structure comprises 65 residues: DNA-directed RNA polymerase subunit Rpo10 (65 aa).

Zn(2+)-binding residues include Cys-7, Cys-10, Cys-44, and Cys-45.

This sequence belongs to the archaeal Rpo10/eukaryotic RPB10 RNA polymerase subunit family. As to quaternary structure, part of the RNA polymerase complex. Requires Zn(2+) as cofactor.

The protein localises to the cytoplasm. It carries out the reaction RNA(n) + a ribonucleoside 5'-triphosphate = RNA(n+1) + diphosphate. In terms of biological role, DNA-dependent RNA polymerase (RNAP) catalyzes the transcription of DNA into RNA using the four ribonucleoside triphosphates as substrates. This chain is DNA-directed RNA polymerase subunit Rpo10, found in Pyrococcus furiosus (strain ATCC 43587 / DSM 3638 / JCM 8422 / Vc1).